Here is a 107-residue protein sequence, read N- to C-terminus: UPF0473 protein llmg_0152 (107 aa).

Belongs to the UPF0473 family.

In Lactococcus lactis subsp. cremoris (strain MG1363), this protein is UPF0473 protein llmg_0152.